A 397-amino-acid chain; its full sequence is Elongation factor Tu (397 aa).

In terms of domain architecture, tr-type G spans 10-207 (KPHVNIGTIG…AVDESIPEPV (198 aa)). Residues 19-26 (GHVDHGKT) are G1. Position 19-26 (19-26 (GHVDHGKT)) interacts with GTP. Residue threonine 26 coordinates Mg(2+). Residues 63–67 (GITIN) are G2. The interval 84-87 (DAPG) is G3. Residues 84-88 (DAPGH) and 139-142 (NKSD) each bind GTP. Residues 139 to 142 (NKSD) form a G4 region. Residues 177–179 (SGL) are G5.

The protein belongs to the TRAFAC class translation factor GTPase superfamily. Classic translation factor GTPase family. EF-Tu/EF-1A subfamily. In terms of assembly, monomer.

The protein localises to the cytoplasm. It catalyses the reaction GTP + H2O = GDP + phosphate + H(+). Functionally, GTP hydrolase that promotes the GTP-dependent binding of aminoacyl-tRNA to the A-site of ribosomes during protein biosynthesis. This chain is Elongation factor Tu, found in Clavibacter sepedonicus (Clavibacter michiganensis subsp. sepedonicus).